A 207-amino-acid polypeptide reads, in one-letter code: Guanylate kinase (207 aa).

The region spanning 6–185 (GLLIVLSGPS…AKQRIQSIVE (180 aa)) is the Guanylate kinase-like domain. 13 to 20 (GPSGVGKG) lines the ATP pocket.

The protein belongs to the guanylate kinase family.

It is found in the cytoplasm. The catalysed reaction is GMP + ATP = GDP + ADP. In terms of biological role, essential for recycling GMP and indirectly, cGMP. In Staphylococcus saprophyticus subsp. saprophyticus (strain ATCC 15305 / DSM 20229 / NCIMB 8711 / NCTC 7292 / S-41), this protein is Guanylate kinase.